The sequence spans 546 residues: MAAKEIIFSDVARTKLTEGVNILANAVKVTLGPKGRNVVLERSFGAPVVTKDGVSVAKEIELADKLQNIGAQLVKEVASRTSDAAGDGTTTATVLAQAIVREGQKYVAAGLNPLDLKRGIDKAVAAAVDALKTISKPTTTSKEIAQVATISANGEESIGQRIAEAIDRVGKEGVITVEDGKSLADELDVVEGLQFDRGYLSPYFINNPDKQIAEIENPYILLHDKKISNIRDLLPVLEQVAKSGRPLLIIAEDVEGEALATLVVNNIRGILKTVAVKAPGFGDRRKALLEDIAILTGGQVVAEETGLALEKATLAELGQAKRIEVGKENTTVIDGAGDAKNIEARVKQIRVQIDEATSDYDREKLQERVAKLAGGVAVIKVGGATEIEVKEKKDRVDDALHATRAAVEEGIVPGGGVALIRVRQAIRELKGANADQDAGIKIVLRALEEPLRQIVTNAGEEASVVVAKVAEGSGNFGYNAQTGEYGDLVESGVLDPTKVTRTALQNAASVAGLLLTTDATVFEAPKDAAPATAPGGPGAGGPGFDF.

Residues 30 to 33 (TLGP), K51, 87 to 91 (DGTTT), G415, and D495 contribute to the ATP site. The tract at residues 527-546 (DAAPATAPGGPGAGGPGFDF) is disordered. Residues 535–546 (GGPGAGGPGFDF) show a composition bias toward gly residues.

The protein belongs to the chaperonin (HSP60) family. As to quaternary structure, forms a cylinder of 14 subunits composed of two heptameric rings stacked back-to-back. Interacts with the co-chaperonin GroES.

It is found in the cytoplasm. It carries out the reaction ATP + H2O + a folded polypeptide = ADP + phosphate + an unfolded polypeptide.. In terms of biological role, together with its co-chaperonin GroES, plays an essential role in assisting protein folding. The GroEL-GroES system forms a nano-cage that allows encapsulation of the non-native substrate proteins and provides a physical environment optimized to promote and accelerate protein folding. The polypeptide is Chaperonin GroEL 2 (Burkholderia ambifaria (strain ATCC BAA-244 / DSM 16087 / CCUG 44356 / LMG 19182 / AMMD) (Burkholderia cepacia (strain AMMD))).